The primary structure comprises 90 residues: Actobindin-B/C (90 aa).

2 consecutive WH2 domains span residues Thr-4–Ala-21 and Asp-40–Val-57. The interval Val-57 to Glu-90 is disordered.

As to quaternary structure, monomer.

Functionally, is able to bind two actin monomers at high concentrations of G-actin. Inhibits actin polymerization by sequestering G-actin and stabilizing actin dimers. The polypeptide is Actobindin-B/C (abnB) (Dictyostelium discoideum (Social amoeba)).